Here is a 319-residue protein sequence, read N- to C-terminus: Formimidoylglutamase (319 aa).

Positions 131, 154, 156, 158, 248, and 250 each coordinate Mn(2+).

Belongs to the arginase family. Mn(2+) serves as cofactor.

It catalyses the reaction N-formimidoyl-L-glutamate + H2O = formamide + L-glutamate. Its pathway is amino-acid degradation; L-histidine degradation into L-glutamate; L-glutamate from N-formimidoyl-L-glutamate (hydrolase route): step 1/1. Its function is as follows. Catalyzes the conversion of N-formimidoyl-L-glutamate to L-glutamate and formamide. This chain is Formimidoylglutamase, found in Legionella pneumophila (strain Lens).